The chain runs to 303 residues: Flavin-dependent thymidylate synthase (303 aa).

The segment at 1–21 (MALTSEQRAEIEAQRSEPQLT) is disordered. In terms of domain architecture, ThyX spans 43–256 (GFLRVVDYMG…PATAAAFEEY (214 aa)). Residues Thr89, 112-114 (RHR), and Glu120 each bind FAD. DUMP contacts are provided by residues 109–112 (QWIR), 120–124 (EYSAR), and Arg195. Residues 112-122 (RHRMASVNEYS) carry the ThyX motif motif. FAD is bound by residues 211 to 213 (DLH) and His217. Arg222 contributes to the dUMP binding site. Arg222 serves as the catalytic Involved in ionization of N3 of dUMP, leading to its activation.

The protein belongs to the thymidylate synthase ThyX family. In terms of assembly, homotetramer. FAD serves as cofactor.

The enzyme catalyses dUMP + (6R)-5,10-methylene-5,6,7,8-tetrahydrofolate + NADPH + H(+) = dTMP + (6S)-5,6,7,8-tetrahydrofolate + NADP(+). Its pathway is pyrimidine metabolism; dTTP biosynthesis. Catalyzes the reductive methylation of 2'-deoxyuridine-5'-monophosphate (dUMP) to 2'-deoxythymidine-5'-monophosphate (dTMP) while utilizing 5,10-methylenetetrahydrofolate (mTHF) as the methyl donor, and NADPH and FADH(2) as the reductant. The sequence is that of Flavin-dependent thymidylate synthase from Gluconobacter oxydans (strain 621H) (Gluconobacter suboxydans).